The chain runs to 60 residues: MAVQKSRKSRSRRDMRRSHHRMEIAEISIDATTGEKHRRHHMTKDGFYRGRQLFKVSQDA.

Positions 1–20 (MAVQKSRKSRSRRDMRRSHH) are enriched in basic residues. The disordered stretch occupies residues 1–22 (MAVQKSRKSRSRRDMRRSHHRM).

The protein belongs to the bacterial ribosomal protein bL32 family.

The sequence is that of Large ribosomal subunit protein bL32 from Psychrobacter arcticus (strain DSM 17307 / VKM B-2377 / 273-4).